The chain runs to 230 residues: Ribonuclease 3 (230 aa).

Residues 5–125 enclose the RNase III domain; sequence YSRLYKILGY…IIGAIYLDSD (121 aa). Glu-40 lines the Mg(2+) pocket. The active site involves Asp-44. Mg(2+)-binding residues include Asp-111 and Glu-114. Glu-114 is a catalytic residue. A DRBM domain is found at 153–223; it reads DSKSKLQEIL…AEKMIQILSQ (71 aa).

This sequence belongs to the ribonuclease III family. In terms of assembly, homodimer. Mg(2+) serves as cofactor.

It is found in the cytoplasm. It carries out the reaction Endonucleolytic cleavage to 5'-phosphomonoester.. In terms of biological role, digests double-stranded RNA. Involved in the processing of primary rRNA transcript to yield the immediate precursors to the large and small rRNAs (23S and 16S). Processes some mRNAs, and tRNAs when they are encoded in the rRNA operon. Processes pre-crRNA and tracrRNA of type II CRISPR loci if present in the organism. This Francisella philomiragia subsp. philomiragia (strain ATCC 25017 / CCUG 19701 / FSC 153 / O#319-036) protein is Ribonuclease 3.